Consider the following 91-residue polypeptide: MRLPYLVCYDISDEGRLNRVYRFMKGKGFHIQYSVFYCILTDVELKEMKAEILKLIHSRYDDVRIYPLPNNSLVAVLGVGDRIPDGVEVFY.

D10 is a Mg(2+) binding site.

This sequence belongs to the CRISPR-associated endoribonuclease Cas2 protein family. In terms of assembly, homodimer, forms a heterotetramer with a Cas1 homodimer. Mg(2+) serves as cofactor.

In terms of biological role, CRISPR (clustered regularly interspaced short palindromic repeat), is an adaptive immune system that provides protection against mobile genetic elements (viruses, transposable elements and conjugative plasmids). CRISPR clusters contain sequences complementary to antecedent mobile elements and target invading nucleic acids. CRISPR clusters are transcribed and processed into CRISPR RNA (crRNA). Functions as a ssRNA-specific endoribonuclease. Involved in the integration of spacer DNA into the CRISPR cassette. The chain is CRISPR-associated endoribonuclease Cas2 2 from Thermodesulfovibrio yellowstonii (strain ATCC 51303 / DSM 11347 / YP87).